The following is a 172-amino-acid chain: 3-hydroxydecanoyl-[acyl-carrier-protein] dehydratase (172 aa).

The active site involves His-71.

This sequence belongs to the thioester dehydratase family. FabA subfamily. Homodimer.

The protein resides in the cytoplasm. It catalyses the reaction a (3R)-hydroxyacyl-[ACP] = a (2E)-enoyl-[ACP] + H2O. The catalysed reaction is (3R)-hydroxydecanoyl-[ACP] = (2E)-decenoyl-[ACP] + H2O. It carries out the reaction (2E)-decenoyl-[ACP] = (3Z)-decenoyl-[ACP]. Its pathway is lipid metabolism; fatty acid biosynthesis. Its function is as follows. Necessary for the introduction of cis unsaturation into fatty acids. Catalyzes the dehydration of (3R)-3-hydroxydecanoyl-ACP to E-(2)-decenoyl-ACP and then its isomerization to Z-(3)-decenoyl-ACP. Can catalyze the dehydratase reaction for beta-hydroxyacyl-ACPs with saturated chain lengths up to 16:0, being most active on intermediate chain length. In Photorhabdus laumondii subsp. laumondii (strain DSM 15139 / CIP 105565 / TT01) (Photorhabdus luminescens subsp. laumondii), this protein is 3-hydroxydecanoyl-[acyl-carrier-protein] dehydratase.